We begin with the raw amino-acid sequence, 395 residues long: S-adenosylmethionine synthase 5 (395 aa).

E10 provides a ligand contact to Mg(2+). H16 contributes to the ATP binding site. E44 lines the K(+) pocket. Residues E57 and Q100 each coordinate L-methionine. Residues 168-170, 236-239, D247, 253-254, A270, K274, and K278 contribute to the ATP site; these read DGK, SGRF, and RK. L-methionine is bound at residue D247. Residue K278 coordinates L-methionine.

Belongs to the AdoMet synthase family. Homotetramer. Mn(2+) is required as a cofactor. It depends on Mg(2+) as a cofactor. Co(2+) serves as cofactor. The cofactor is K(+).

The protein localises to the cytoplasm. It catalyses the reaction L-methionine + ATP + H2O = S-adenosyl-L-methionine + phosphate + diphosphate. It functions in the pathway amino-acid biosynthesis; S-adenosyl-L-methionine biosynthesis; S-adenosyl-L-methionine from L-methionine: step 1/1. Its function is as follows. Catalyzes the formation of S-adenosylmethionine from methionine and ATP. The reaction comprises two steps that are both catalyzed by the same enzyme: formation of S-adenosylmethionine (AdoMet) and triphosphate, and subsequent hydrolysis of the triphosphate. This chain is S-adenosylmethionine synthase 5 (METK5), found in Populus trichocarpa (Western balsam poplar).